Consider the following 435-residue polypeptide: Light-independent protochlorophyllide reductase subunit N (435 aa).

[4Fe-4S] cluster contacts are provided by cysteine 23, cysteine 48, and cysteine 108.

This sequence belongs to the BchN/ChlN family. Protochlorophyllide reductase is composed of three subunits; ChlL, ChlN and ChlB. Forms a heterotetramer of two ChlB and two ChlN subunits. Requires [4Fe-4S] cluster as cofactor.

Its subcellular location is the plastid. It is found in the chloroplast. The catalysed reaction is chlorophyllide a + oxidized 2[4Fe-4S]-[ferredoxin] + 2 ADP + 2 phosphate = protochlorophyllide a + reduced 2[4Fe-4S]-[ferredoxin] + 2 ATP + 2 H2O. Its pathway is porphyrin-containing compound metabolism; chlorophyll biosynthesis (light-independent). Its function is as follows. Component of the dark-operative protochlorophyllide reductase (DPOR) that uses Mg-ATP and reduced ferredoxin to reduce ring D of protochlorophyllide (Pchlide) to form chlorophyllide a (Chlide). This reaction is light-independent. The NB-protein (ChlN-ChlB) is the catalytic component of the complex. In Auxenochlorella protothecoides (Green microalga), this protein is Light-independent protochlorophyllide reductase subunit N.